Consider the following 494-residue polypeptide: 3-octaprenyl-4-hydroxybenzoate carboxy-lyase (494 aa).

Residue Asn172 participates in Mn(2+) binding. Residues Ile175 to Arg177, Arg189 to Leu191, and Arg194 to Gly195 contribute to the prenylated FMN site. Glu238 lines the Mn(2+) pocket. The Proton donor role is filled by Asp287.

The protein belongs to the UbiD family. Homohexamer. The cofactor is prenylated FMN. Mn(2+) is required as a cofactor.

It is found in the cell membrane. It carries out the reaction a 4-hydroxy-3-(all-trans-polyprenyl)benzoate + H(+) = a 2-(all-trans-polyprenyl)phenol + CO2. It functions in the pathway cofactor biosynthesis; ubiquinone biosynthesis. Functionally, catalyzes the decarboxylation of 3-octaprenyl-4-hydroxy benzoate to 2-octaprenylphenol, an intermediate step in ubiquinone biosynthesis. The sequence is that of 3-octaprenyl-4-hydroxybenzoate carboxy-lyase from Escherichia coli O9:H4 (strain HS).